Reading from the N-terminus, the 908-residue chain is Metabotropic glutamate receptor 8 (908 aa).

An N-terminal signal peptide occupies residues 1 to 33 (MVCEGKRSTSCPCFFLLTAKFYWILTMMQRTHS). The Extracellular segment spans residues 34-583 (QEYAHSIRLD…IIKLEWHSPW (550 aa)). Residues cysteine 64 and cysteine 106 are joined by a disulfide bond. Asparagine 95 carries an N-linked (GlcNAc...) asparagine glycan. L-glutamate is bound by residues serine 156, 177–179 (AST), and tyrosine 227. 7 cysteine pairs are disulfide-bonded: cysteine 246-cysteine 534, cysteine 369-cysteine 384, cysteine 424-cysteine 431, cysteine 516-cysteine 535, cysteine 520-cysteine 538, cysteine 541-cysteine 553, and cysteine 556-cysteine 569. Asparagine 298 carries an N-linked (GlcNAc...) asparagine glycan. Position 309 (aspartate 309) interacts with L-glutamate. Residue lysine 401 coordinates L-glutamate. 2 N-linked (GlcNAc...) asparagine glycosylation sites follow: asparagine 452 and asparagine 480. Asparagine 565 is a glycosylation site (N-linked (GlcNAc...) asparagine). Residues 584–608 (AVVPVFIAILGIIATTFVIVTFVRY) form a helical membrane-spanning segment. Residues 609–620 (NDTPIVRASGRE) are Cytoplasmic-facing. Residues 621–641 (LSYVLLTGIFLCYSITFLMIA) traverse the membrane as a helical segment. Residues 642–647 (APDTII) are Extracellular-facing. Residues 648–668 (CSFRRIFLGLGMCFSYAALLT) traverse the membrane as a helical segment. The Cytoplasmic portion of the chain corresponds to 669–695 (KTNRIHRIFEQGKKSVTAPKFISPASQ). Residues 696–716 (LVITFSLISVQLLGVFVWFVV) traverse the membrane as a helical segment. Over 717-746 (DPPHTIIDYGEQRTLDPENARGVLKCDISD) the chain is Extracellular. The helical transmembrane segment at 747-768 (LSLICSLGYSILLMVTCTVYAI) threads the bilayer. Residues 769 to 781 (KTRGVPETFNEAK) are Cytoplasmic-facing. The helical transmembrane segment at 782–803 (PIGFTMYTTCIIWLAFIPIFFG) threads the bilayer. Topologically, residues 804-818 (TAQSAEKMYIQTTTL) are extracellular. A helical membrane pass occupies residues 819–843 (TVSMSLSASVSLGMLYMPKVYIIIF). Over 844 to 908 (HPEQNVQKRK…TYISYSNHSI (65 aa)) the chain is Cytoplasmic. Lysine 882 is covalently cross-linked (Glycyl lysine isopeptide (Lys-Gly) (interchain with G-Cter in SUMO1)).

This sequence belongs to the G-protein coupled receptor 3 family. Interacts with PICK1. As to expression, strongly expressed in olfactory bulb, accessory olfactory bulb, and mammillary body. Weaker expression in the retina, and in scattered cells in the cortex and hindbrain.

The protein localises to the cell membrane. G-protein coupled receptor for glutamate. Ligand binding causes a conformation change that triggers signaling via guanine nucleotide-binding proteins (G proteins) and modulates the activity of down-stream effectors. Signaling inhibits adenylate cyclase activity. This Mus musculus (Mouse) protein is Metabotropic glutamate receptor 8 (Grm8).